Consider the following 66-residue polypeptide: MFTLKKSLLLLFFLGTISLSLCEEERNAEEERRDYPEERDVEVEKRFLSLALAALPKLFCLIFKKC.

The signal sequence occupies residues 1–22; sequence MFTLKKSLLLLFFLGTISLSLC. Residues 23 to 44 constitute a propeptide that is removed on maturation; that stretch reads EEERNAEEERRDYPEERDVEVE. An intrachain disulfide couples cysteine 60 to cysteine 66.

As to expression, expressed by the skin glands.

It localises to the secreted. Functionally, antimicrobial peptide. Has low activity against the Gram-positive bacterium S.aureus and the Gram-negative bacterium E.coli (MIC&lt;15 uM). Has a strong hemolytic activity. This Rana dybowskii (Dybovsky's frog) protein is Brevinin-1DYb.